A 182-amino-acid polypeptide reads, in one-letter code: UPF0200 protein Mthe_1012 (182 aa).

Position 8–15 (8–15 (GMPGSGKS)) interacts with ATP.

The protein belongs to the UPF0200 family.

This chain is UPF0200 protein Mthe_1012, found in Methanothrix thermoacetophila (strain DSM 6194 / JCM 14653 / NBRC 101360 / PT) (Methanosaeta thermophila).